The following is a 106-amino-acid chain: Acidic phospholipase A2 PhTX-III (106 aa).

Residues Y23, G25, and G27 each contribute to the Ca(2+) site. 5 disulfide bridges follow: C24-C40, C39-C75, C45-C106, C46-C68, and C55-C66. H43 is a catalytic residue. Position 44 (D44) interacts with Ca(2+). The active site involves D69.

Requires Ca(2+) as cofactor. As to expression, expressed by the venom gland.

Its subcellular location is the secreted. It catalyses the reaction a 1,2-diacyl-sn-glycero-3-phosphocholine + H2O = a 1-acyl-sn-glycero-3-phosphocholine + a fatty acid + H(+). Its activity is regulated as follows. Partially inhibited by magnesium ions and completely inhibited by zinc ions These divalent cations may act as competitive antagonists of the cofactor. In terms of biological role, snake venom phospholipase A2 (PLA2) that induces inflammatory response, with local edema and release of cytokines IL-1 alpha, IL-6 and TNF-alpha. Does not exhibit myotoxic, anticoagulant and antibacterial effects. Release of pro-inflammatory cytokines may be due to mast cell degranulation, and edema may be induced by arachidonic acid that results from the PLA2 catalytic activity. PLA2 catalyzes the calcium-dependent hydrolysis of the 2-acyl groups in 3-sn-phosphoglycerides. This is Acidic phospholipase A2 PhTX-III from Bothrocophias hyoprora (Amazonian hognose viper).